The primary structure comprises 329 residues: Acetyl-coenzyme A carboxylase carboxyl transferase subunit alpha (329 aa).

The CoA carboxyltransferase C-terminal domain maps to 40–294; the sequence is QLETLAARRR…REAIERHLDD (255 aa).

The protein belongs to the AccA family. As to quaternary structure, acetyl-CoA carboxylase is a heterohexamer composed of biotin carboxyl carrier protein (AccB), biotin carboxylase (AccC) and two subunits each of ACCase subunit alpha (AccA) and ACCase subunit beta (AccD).

The protein resides in the cytoplasm. The catalysed reaction is N(6)-carboxybiotinyl-L-lysyl-[protein] + acetyl-CoA = N(6)-biotinyl-L-lysyl-[protein] + malonyl-CoA. It participates in lipid metabolism; malonyl-CoA biosynthesis; malonyl-CoA from acetyl-CoA: step 1/1. Component of the acetyl coenzyme A carboxylase (ACC) complex. First, biotin carboxylase catalyzes the carboxylation of biotin on its carrier protein (BCCP) and then the CO(2) group is transferred by the carboxyltransferase to acetyl-CoA to form malonyl-CoA. In Prochlorococcus marinus (strain MIT 9303), this protein is Acetyl-coenzyme A carboxylase carboxyl transferase subunit alpha.